The chain runs to 78 residues: Exodeoxyribonuclease 7 small subunit (78 aa).

It belongs to the XseB family. In terms of assembly, heterooligomer composed of large and small subunits.

Its subcellular location is the cytoplasm. It carries out the reaction Exonucleolytic cleavage in either 5'- to 3'- or 3'- to 5'-direction to yield nucleoside 5'-phosphates.. Its function is as follows. Bidirectionally degrades single-stranded DNA into large acid-insoluble oligonucleotides, which are then degraded further into small acid-soluble oligonucleotides. In Desulfitobacterium hafniense (strain Y51), this protein is Exodeoxyribonuclease 7 small subunit.